Reading from the N-terminus, the 546-residue chain is Chaperonin GroEL (546 aa).

Residues 29–32 (TLGP), K50, 86–90 (DGTTT), G414, and D495 each bind ATP. Residues 526–546 (AKEGAPAGGGMPDMGGMGGMM) are disordered. The segment covering 531–546 (PAGGGMPDMGGMGGMM) has biased composition (gly residues).

This sequence belongs to the chaperonin (HSP60) family. In terms of assembly, forms a cylinder of 14 subunits composed of two heptameric rings stacked back-to-back. Interacts with the co-chaperonin GroES.

The protein resides in the cytoplasm. It catalyses the reaction ATP + H2O + a folded polypeptide = ADP + phosphate + an unfolded polypeptide.. Together with its co-chaperonin GroES, plays an essential role in assisting protein folding. The GroEL-GroES system forms a nano-cage that allows encapsulation of the non-native substrate proteins and provides a physical environment optimized to promote and accelerate protein folding. The protein is Chaperonin GroEL of Jannaschia sp. (strain CCS1).